A 146-amino-acid chain; its full sequence is Large ribosomal subunit protein uL15 (146 aa).

Residues 1–64 form a disordered region; sequence MQLNTIKPAI…MPMHRRLPKR (64 aa). The span at 30–39 shows a compositional bias: basic residues; the sequence is TATKGHKGQK.

The protein belongs to the universal ribosomal protein uL15 family. In terms of assembly, part of the 50S ribosomal subunit.

Functionally, binds to the 23S rRNA. The chain is Large ribosomal subunit protein uL15 from Geobacter sp. (strain M21).